The sequence spans 327 residues: Methionyl-tRNA formyltransferase (327 aa).

Residue 121-124 (SLLP) coordinates (6S)-5,6,7,8-tetrahydrofolate.

This sequence belongs to the Fmt family.

It catalyses the reaction L-methionyl-tRNA(fMet) + (6R)-10-formyltetrahydrofolate = N-formyl-L-methionyl-tRNA(fMet) + (6S)-5,6,7,8-tetrahydrofolate + H(+). In terms of biological role, attaches a formyl group to the free amino group of methionyl-tRNA(fMet). The formyl group appears to play a dual role in the initiator identity of N-formylmethionyl-tRNA by promoting its recognition by IF2 and preventing the misappropriation of this tRNA by the elongation apparatus. The polypeptide is Methionyl-tRNA formyltransferase (Burkholderia ambifaria (strain MC40-6)).